Here is a 336-residue protein sequence, read N- to C-terminus: Dihydroorotate dehydrogenase (quinone) (336 aa).

Residues A62–K66 and T86 contribute to the FMN site. K66 contacts substrate. Position 111-115 (N111–F115) interacts with substrate. Residues N139 and N172 each contribute to the FMN site. N172 serves as a coordination point for substrate. S175 functions as the Nucleophile in the catalytic mechanism. A substrate-binding site is contributed by N177. FMN contacts are provided by K217 and T245. N246–T247 is a binding site for substrate. FMN is bound by residues G268, G297, and Y318–S319.

It belongs to the dihydroorotate dehydrogenase family. Type 2 subfamily. As to quaternary structure, monomer. It depends on FMN as a cofactor.

It is found in the cell membrane. It catalyses the reaction (S)-dihydroorotate + a quinone = orotate + a quinol. Its pathway is pyrimidine metabolism; UMP biosynthesis via de novo pathway; orotate from (S)-dihydroorotate (quinone route): step 1/1. Its function is as follows. Catalyzes the conversion of dihydroorotate to orotate with quinone as electron acceptor. This Aliivibrio fischeri (strain MJ11) (Vibrio fischeri) protein is Dihydroorotate dehydrogenase (quinone).